The following is a 187-amino-acid chain: Peptidyl-tRNA hydrolase (187 aa).

Y14 is a tRNA binding site. H19 acts as the Proton acceptor in catalysis. Residues Y60, N62, and N108 each contribute to the tRNA site.

It belongs to the PTH family. In terms of assembly, monomer.

Its subcellular location is the cytoplasm. It catalyses the reaction an N-acyl-L-alpha-aminoacyl-tRNA + H2O = an N-acyl-L-amino acid + a tRNA + H(+). Hydrolyzes ribosome-free peptidyl-tRNAs (with 1 or more amino acids incorporated), which drop off the ribosome during protein synthesis, or as a result of ribosome stalling. Functionally, catalyzes the release of premature peptidyl moieties from peptidyl-tRNA molecules trapped in stalled 50S ribosomal subunits, and thus maintains levels of free tRNAs and 50S ribosomes. The sequence is that of Peptidyl-tRNA hydrolase from Mycoplasmopsis synoviae (strain 53) (Mycoplasma synoviae).